Reading from the N-terminus, the 88-residue chain is UPF0298 protein BcerKBAB4_3759 (88 aa).

Belongs to the UPF0298 family.

The protein resides in the cytoplasm. The sequence is that of UPF0298 protein BcerKBAB4_3759 from Bacillus mycoides (strain KBAB4) (Bacillus weihenstephanensis).